The primary structure comprises 155 residues: 6,7-dimethyl-8-ribityllumazine synthase (155 aa).

Residues Trp22, 56 to 58 (SYE), and 80 to 82 (AVI) contribute to the 5-amino-6-(D-ribitylamino)uracil site. 85–86 (DT) is a (2S)-2-hydroxy-3-oxobutyl phosphate binding site. Residue His88 is the Proton donor of the active site. Position 113 (Phe113) interacts with 5-amino-6-(D-ribitylamino)uracil. Arg127 lines the (2S)-2-hydroxy-3-oxobutyl phosphate pocket.

The protein belongs to the DMRL synthase family.

It carries out the reaction (2S)-2-hydroxy-3-oxobutyl phosphate + 5-amino-6-(D-ribitylamino)uracil = 6,7-dimethyl-8-(1-D-ribityl)lumazine + phosphate + 2 H2O + H(+). The protein operates within cofactor biosynthesis; riboflavin biosynthesis; riboflavin from 2-hydroxy-3-oxobutyl phosphate and 5-amino-6-(D-ribitylamino)uracil: step 1/2. Its function is as follows. Catalyzes the formation of 6,7-dimethyl-8-ribityllumazine by condensation of 5-amino-6-(D-ribitylamino)uracil with 3,4-dihydroxy-2-butanone 4-phosphate. This is the penultimate step in the biosynthesis of riboflavin. The protein is 6,7-dimethyl-8-ribityllumazine synthase of Deinococcus radiodurans (strain ATCC 13939 / DSM 20539 / JCM 16871 / CCUG 27074 / LMG 4051 / NBRC 15346 / NCIMB 9279 / VKM B-1422 / R1).